Reading from the N-terminus, the 603-residue chain is NADH-ubiquinone oxidoreductase chain 5 (603 aa).

16 helical membrane-spanning segments follow: residues 4 to 24, 38 to 58, 89 to 109, 122 to 142, 171 to 191, 211 to 233, 241 to 261, 273 to 293, 301 to 320, 325 to 347, 366 to 386, 405 to 424, 457 to 477, 488 to 508, 524 to 544, and 582 to 602; these read FTTM…ATLI, TAIA…ICLG, FLPV…WYMA, LIFL…QLFI, AILY…WFLL, LPLL…HPWL, TPVS…FLLI, IQTL…ICAL, IVAF…IGIN, ALLH…GSII, MPLT…MPFL, NTWA…AYST, LMLG…PMSL, LAAL…NYLA, IMLG…SLLM, and GLIK…LLMI.

It belongs to the complex I subunit 5 family. In terms of assembly, core subunit of respiratory chain NADH dehydrogenase (Complex I) which is composed of 45 different subunits.

The protein resides in the mitochondrion inner membrane. The enzyme catalyses a ubiquinone + NADH + 5 H(+)(in) = a ubiquinol + NAD(+) + 4 H(+)(out). Core subunit of the mitochondrial membrane respiratory chain NADH dehydrogenase (Complex I) which catalyzes electron transfer from NADH through the respiratory chain, using ubiquinone as an electron acceptor. Essential for the catalytic activity and assembly of complex I. The polypeptide is NADH-ubiquinone oxidoreductase chain 5 (MT-ND5) (Pongo abelii (Sumatran orangutan)).